The following is a 117-amino-acid chain: Large ribosomal subunit protein bL20 (117 aa).

This sequence belongs to the bacterial ribosomal protein bL20 family.

Binds directly to 23S ribosomal RNA and is necessary for the in vitro assembly process of the 50S ribosomal subunit. It is not involved in the protein synthesizing functions of that subunit. This chain is Large ribosomal subunit protein bL20, found in Oleidesulfovibrio alaskensis (strain ATCC BAA-1058 / DSM 17464 / G20) (Desulfovibrio alaskensis).